We begin with the raw amino-acid sequence, 451 residues long: uncharacterized protein (451 aa).

The next 5 helical transmembrane spans lie at 11-31 (VLLK…YIDL), 56-76 (IQIY…SIGT), 151-171 (IIGI…NIYL), 175-195 (FWLI…LIIF), and 207-227 (VYSV…TIKI). The segment at 250 to 300 (TKSNNNNNNNNNNKQDDNIIYDTDSSFNGQSSSSSSSSSSSSSSSSSATTT) is disordered. Low complexity-rich tracts occupy residues 253 to 262 (NNNNNNNNNN) and 280 to 300 (SSSS…ATTT). The next 2 helical transmembrane spans lie at 392–412 (FVGV…SDYS) and 413–433 (LLTI…LTYL).

The protein localises to the membrane. This is an uncharacterized protein from Dictyostelium discoideum (Social amoeba).